Reading from the N-terminus, the 148-residue chain is Arginine repressor (148 aa).

The protein belongs to the ArgR family.

The protein localises to the cytoplasm. Its pathway is amino-acid biosynthesis; L-arginine biosynthesis [regulation]. Regulates arginine biosynthesis genes. In Chlorobium luteolum (strain DSM 273 / BCRC 81028 / 2530) (Pelodictyon luteolum), this protein is Arginine repressor.